Here is a 246-residue protein sequence, read N- to C-terminus: Adenosylcobinamide-GDP ribazoletransferase (246 aa).

The next 6 helical transmembrane spans lie at 34–54 (IVTF…VALL), 59–79 (CGVP…TGGF), 113–133 (GGLA…ELLL), 138–158 (PIAA…LLMY), 171–191 (LFIG…GVAL), and 194–214 (VLLG…IWGL).

This sequence belongs to the CobS family. Mg(2+) serves as cofactor.

It localises to the cell inner membrane. It carries out the reaction alpha-ribazole + adenosylcob(III)inamide-GDP = adenosylcob(III)alamin + GMP + H(+). It catalyses the reaction alpha-ribazole 5'-phosphate + adenosylcob(III)inamide-GDP = adenosylcob(III)alamin 5'-phosphate + GMP + H(+). It functions in the pathway cofactor biosynthesis; adenosylcobalamin biosynthesis; adenosylcobalamin from cob(II)yrinate a,c-diamide: step 7/7. Functionally, joins adenosylcobinamide-GDP and alpha-ribazole to generate adenosylcobalamin (Ado-cobalamin). Also synthesizes adenosylcobalamin 5'-phosphate from adenosylcobinamide-GDP and alpha-ribazole 5'-phosphate. This is Adenosylcobinamide-GDP ribazoletransferase from Klebsiella pneumoniae (strain 342).